We begin with the raw amino-acid sequence, 152 residues long: Deoxyuridine 5'-triphosphate nucleotidohydrolase (152 aa).

Substrate-binding positions include 71-73 (RSG), N84, 88-90 (LID), and M98.

This sequence belongs to the dUTPase family. It depends on Mg(2+) as a cofactor.

It carries out the reaction dUTP + H2O = dUMP + diphosphate + H(+). Its pathway is pyrimidine metabolism; dUMP biosynthesis; dUMP from dCTP (dUTP route): step 2/2. In terms of biological role, this enzyme is involved in nucleotide metabolism: it produces dUMP, the immediate precursor of thymidine nucleotides and it decreases the intracellular concentration of dUTP so that uracil cannot be incorporated into DNA. In Shigella flexneri, this protein is Deoxyuridine 5'-triphosphate nucleotidohydrolase.